Reading from the N-terminus, the 739-residue chain is Phosphoribosylformylglycinamidine synthase subunit PurL (739 aa).

Residue His-53 is part of the active site. The ATP site is built by Tyr-56 and Lys-95. A Mg(2+)-binding site is contributed by Glu-97. Substrate is bound by residues 98–101 and Arg-120; that span reads SHNH. Residue His-99 is the Proton acceptor of the active site. Asp-121 is a binding site for Mg(2+). Residue Gln-244 participates in substrate binding. Position 274 (Asp-274) interacts with Mg(2+). 318–320 contacts substrate; the sequence is ESQ. ATP contacts are provided by Asp-501 and Gly-538. Position 539 (Asn-539) interacts with Mg(2+). Ser-541 provides a ligand contact to substrate.

Belongs to the FGAMS family. As to quaternary structure, monomer. Part of the FGAM synthase complex composed of 1 PurL, 1 PurQ and 2 PurS subunits.

The protein localises to the cytoplasm. The enzyme catalyses N(2)-formyl-N(1)-(5-phospho-beta-D-ribosyl)glycinamide + L-glutamine + ATP + H2O = 2-formamido-N(1)-(5-O-phospho-beta-D-ribosyl)acetamidine + L-glutamate + ADP + phosphate + H(+). It functions in the pathway purine metabolism; IMP biosynthesis via de novo pathway; 5-amino-1-(5-phospho-D-ribosyl)imidazole from N(2)-formyl-N(1)-(5-phospho-D-ribosyl)glycinamide: step 1/2. In terms of biological role, part of the phosphoribosylformylglycinamidine synthase complex involved in the purines biosynthetic pathway. Catalyzes the ATP-dependent conversion of formylglycinamide ribonucleotide (FGAR) and glutamine to yield formylglycinamidine ribonucleotide (FGAM) and glutamate. The FGAM synthase complex is composed of three subunits. PurQ produces an ammonia molecule by converting glutamine to glutamate. PurL transfers the ammonia molecule to FGAR to form FGAM in an ATP-dependent manner. PurS interacts with PurQ and PurL and is thought to assist in the transfer of the ammonia molecule from PurQ to PurL. The protein is Phosphoribosylformylglycinamidine synthase subunit PurL of Listeria innocua serovar 6a (strain ATCC BAA-680 / CLIP 11262).